An 885-amino-acid polypeptide reads, in one-letter code: Leucine--tRNA ligase (885 aa).

Positions 48-58 (PYPSGKLHMGH) match the 'HIGH' region motif. The 'KMSKS' region signature appears at 639–643 (TMSKS). An ATP-binding site is contributed by K642.

This sequence belongs to the class-I aminoacyl-tRNA synthetase family.

The protein localises to the cytoplasm. The catalysed reaction is tRNA(Leu) + L-leucine + ATP = L-leucyl-tRNA(Leu) + AMP + diphosphate. This is Leucine--tRNA ligase from Bordetella petrii (strain ATCC BAA-461 / DSM 12804 / CCUG 43448).